The following is a 205-amino-acid chain: Proteasome subunit beta type-3 (205 aa).

Ser-2 carries the N-acetylserine modification. The residue at position 77 (Lys-77) is an N6-acetyllysine.

Belongs to the peptidase T1B family. The 26S proteasome consists of a 20S proteasome core and two 19S regulatory subunits. The 20S proteasome core is a barrel-shaped complex made of 28 subunits that are arranged in four stacked rings. The two outer rings are each formed by seven alpha subunits, and the two inner rings are formed by seven beta subunits. The proteolytic activity is exerted by three beta-subunits PSMB5, PSMB6 and PSMB7.

The protein resides in the cytoplasm. The protein localises to the nucleus. Functionally, non-catalytic component of the 20S core proteasome complex involved in the proteolytic degradation of most intracellular proteins. This complex plays numerous essential roles within the cell by associating with different regulatory particles. Associated with two 19S regulatory particles, forms the 26S proteasome and thus participates in the ATP-dependent degradation of ubiquitinated proteins. The 26S proteasome plays a key role in the maintenance of protein homeostasis by removing misfolded or damaged proteins that could impair cellular functions, and by removing proteins whose functions are no longer required. Associated with the PA200 or PA28, the 20S proteasome mediates ubiquitin-independent protein degradation. This type of proteolysis is required in several pathways including spermatogenesis (20S-PA200 complex) or generation of a subset of MHC class I-presented antigenic peptides (20S-PA28 complex). This Rattus norvegicus (Rat) protein is Proteasome subunit beta type-3 (Psmb3).